Reading from the N-terminus, the 691-residue chain is Elongation factor G (691 aa).

Positions 8-282 (ERVRNIGIAA…AVVDYLPAPI (275 aa)) constitute a tr-type G domain. GTP is bound by residues 17-24 (AHIDAGKT), 81-85 (DTPGH), and 135-138 (NKMD).

Belongs to the TRAFAC class translation factor GTPase superfamily. Classic translation factor GTPase family. EF-G/EF-2 subfamily.

It localises to the cytoplasm. Catalyzes the GTP-dependent ribosomal translocation step during translation elongation. During this step, the ribosome changes from the pre-translocational (PRE) to the post-translocational (POST) state as the newly formed A-site-bound peptidyl-tRNA and P-site-bound deacylated tRNA move to the P and E sites, respectively. Catalyzes the coordinated movement of the two tRNA molecules, the mRNA and conformational changes in the ribosome. This is Elongation factor G from Synechococcus sp. (strain WH7803).